Consider the following 291-residue polypeptide: Zinc transporter ZupT (291 aa).

The next 8 membrane-spanning stretches (helical) occupy residues 8 to 28 (IFIA…GSII), 39 to 59 (VLSL…FMEI), 74 to 94 (HWAE…SLLI), 147 to 167 (GIFT…ATFI), 174 to 194 (TLGI…GLAV), 209 to 229 (FIYS…GALI), 233 to 253 (FIGD…MVFI), and 271 to 291 (SLYG…LLGQ). Fe(2+) is bound by residues N158 and E161. 2 residues coordinate Zn(2+): E161 and H186. Positions 187, 190, and 219 each coordinate Fe(2+). Zn(2+) is bound at residue E190.

It belongs to the ZIP transporter (TC 2.A.5) family. ZupT subfamily.

The protein localises to the cell inner membrane. It catalyses the reaction Zn(2+)(in) = Zn(2+)(out). Its function is as follows. Mediates zinc uptake. May also transport other divalent cations. This Campylobacter jejuni subsp. jejuni serotype O:2 (strain ATCC 700819 / NCTC 11168) protein is Zinc transporter ZupT.